A 127-amino-acid chain; its full sequence is Small ribosomal subunit protein uS11 (127 aa).

Belongs to the universal ribosomal protein uS11 family. Part of the 30S ribosomal subunit.

Functionally, located on the platform of the 30S subunit. The chain is Small ribosomal subunit protein uS11 from Picrophilus torridus (strain ATCC 700027 / DSM 9790 / JCM 10055 / NBRC 100828 / KAW 2/3).